Consider the following 292-residue polypeptide: Acetylglutamate kinase (292 aa).

Substrate contacts are provided by residues glycine 64–glycine 65, arginine 86, and asparagine 190.

The protein belongs to the acetylglutamate kinase family. ArgB subfamily.

Its subcellular location is the cytoplasm. The enzyme catalyses N-acetyl-L-glutamate + ATP = N-acetyl-L-glutamyl 5-phosphate + ADP. Its pathway is amino-acid biosynthesis; L-arginine biosynthesis; N(2)-acetyl-L-ornithine from L-glutamate: step 2/4. Catalyzes the ATP-dependent phosphorylation of N-acetyl-L-glutamate. In Geotalea daltonii (strain DSM 22248 / JCM 15807 / FRC-32) (Geobacter daltonii), this protein is Acetylglutamate kinase.